The sequence spans 400 residues: Argininosuccinate synthase (400 aa).

Residue 10–18 (AYSGGVDTS) coordinates ATP. Tyr-89 is a binding site for L-citrulline. Gly-119 lines the ATP pocket. 3 residues coordinate L-aspartate: Thr-121, Asn-125, and Asp-126. Asn-125 contributes to the L-citrulline binding site. The L-citrulline site is built by Arg-129, Ser-177, Ser-186, Glu-262, and Tyr-274.

This sequence belongs to the argininosuccinate synthase family. Type 1 subfamily. Homotetramer.

Its subcellular location is the cytoplasm. It catalyses the reaction L-citrulline + L-aspartate + ATP = 2-(N(omega)-L-arginino)succinate + AMP + diphosphate + H(+). It participates in amino-acid biosynthesis; L-arginine biosynthesis; L-arginine from L-ornithine and carbamoyl phosphate: step 2/3. The chain is Argininosuccinate synthase from Synechococcus sp. (strain JA-2-3B'a(2-13)) (Cyanobacteria bacterium Yellowstone B-Prime).